The chain runs to 431 residues: Phosphate regulon sensor protein PhoR (431 aa).

The Cytoplasmic segment spans residues 1-9 (MLERLSWKR). The helical transmembrane segment at 10 to 28 (LVLELLLCCLPAFILGAFF) threads the bilayer. The Periplasmic portion of the chain corresponds to 29–32 (GYLP). The helical transmembrane segment at 33-51 (WFLLASVTGLLIWHFWNLL) threads the bilayer. The Cytoplasmic portion of the chain corresponds to 52–431 (RLSWWLWVDR…PERLIAKNSD (380 aa)). Residues 96-172 (LIKRFRSGAE…RPLNLVLNTG (77 aa)) form the PAS domain. The region spanning 210 to 425 (NVSHELRTPL…RFSFVIPERL (216 aa)) is the Histidine kinase domain. Position 213 is a phosphohistidine; by autocatalysis (H213).

The protein localises to the cell inner membrane. It carries out the reaction ATP + protein L-histidine = ADP + protein N-phospho-L-histidine.. Functionally, member of the two-component regulatory system PhoR/PhoB involved in the phosphate regulon genes expression. PhoR may function as a membrane-associated protein kinase that phosphorylates PhoB in response to environmental signals. The protein is Phosphate regulon sensor protein PhoR (phoR) of Escherichia coli (strain K12).